Here is a 762-residue protein sequence, read N- to C-terminus: Subtilisin-like protease SBT3.11 (762 aa).

The first 16 residues, 1–16 (MMSSIVSWWFFWVISA), serve as a signal peptide directing secretion. Residues 17–116 (VCILKVEFNI…VTPNTFYELQ (100 aa)) constitute a propeptide, activation peptide. The Inhibitor I9 domain occupies 37-115 (VHIVYLGEKE…QVTPNTFYEL (79 aa)). In terms of domain architecture, Peptidase S8 spans 120-609 (TFDYLGLSHS…GGLVNPNKAA (490 aa)). Residue Asp150 is the Charge relay system of the active site. N-linked (GlcNAc...) asparagine glycosylation occurs at Asn206. His226 functions as the Charge relay system in the catalytic mechanism. Residues Asn241 and Asn371 are each glycosylated (N-linked (GlcNAc...) asparagine). The active-site Charge relay system is Ser540.

This sequence belongs to the peptidase S8 family.

The protein localises to the secreted. This is Subtilisin-like protease SBT3.11 from Arabidopsis thaliana (Mouse-ear cress).